The following is a 365-amino-acid chain: UDP-N-acetylglucosamine--N-acetylmuramyl-(pentapeptide) pyrophosphoryl-undecaprenol N-acetylglucosamine transferase (365 aa).

Residues 19-21 (TGG), N131, R170, S201, I255, 274-279 (ALTVTE), and Q300 each bind UDP-N-acetyl-alpha-D-glucosamine.

This sequence belongs to the glycosyltransferase 28 family. MurG subfamily.

It is found in the cell inner membrane. It catalyses the reaction di-trans,octa-cis-undecaprenyl diphospho-N-acetyl-alpha-D-muramoyl-L-alanyl-D-glutamyl-meso-2,6-diaminopimeloyl-D-alanyl-D-alanine + UDP-N-acetyl-alpha-D-glucosamine = di-trans,octa-cis-undecaprenyl diphospho-[N-acetyl-alpha-D-glucosaminyl-(1-&gt;4)]-N-acetyl-alpha-D-muramoyl-L-alanyl-D-glutamyl-meso-2,6-diaminopimeloyl-D-alanyl-D-alanine + UDP + H(+). It participates in cell wall biogenesis; peptidoglycan biosynthesis. In terms of biological role, cell wall formation. Catalyzes the transfer of a GlcNAc subunit on undecaprenyl-pyrophosphoryl-MurNAc-pentapeptide (lipid intermediate I) to form undecaprenyl-pyrophosphoryl-MurNAc-(pentapeptide)GlcNAc (lipid intermediate II). This is UDP-N-acetylglucosamine--N-acetylmuramyl-(pentapeptide) pyrophosphoryl-undecaprenol N-acetylglucosamine transferase from Acinetobacter baumannii (strain SDF).